The following is a 454-amino-acid chain: Glutamine synthetase (454 aa).

Residues 25–111 enclose the GS beta-grasp domain; it reads QGIDFLRLQF…LICDVVDREG (87 aa). In terms of domain architecture, GS catalytic spans 118-454; that stretch reads PRQVLKNVLA…WETDRYLEKF (337 aa). Mg(2+)-binding residues include Glu-141 and Glu-143. Residue Glu-193 coordinates ATP. Residues Glu-198 and Glu-205 each contribute to the Mg(2+) site. Residues 249–250 and Gly-250 each bind L-glutamate; that span reads NG. Mg(2+) is bound at residue His-254. Residues 256–258 and Ser-258 contribute to the ATP site; that span reads HIS. L-glutamate-binding residues include Arg-308, Glu-314, and Arg-326. Residues Arg-326 and Arg-331 each coordinate ATP. Position 343 (Glu-343) interacts with Mg(2+). Residue Arg-345 coordinates L-glutamate.

The protein belongs to the glutamine synthetase family. Oligomer of 12 subunits arranged in the form of two hexagons. In its feedback-inhibited form, interacts with TnrA in order to block its DNA-binding activity. It depends on Mg(2+) as a cofactor.

The protein localises to the cytoplasm. It catalyses the reaction L-glutamate + NH4(+) + ATP = L-glutamine + ADP + phosphate + H(+). Inhibited by glutamine. In terms of biological role, glutamine synthetase (GS) is an unusual multitasking protein that functions as an enzyme, a transcription coregulator, and a chaperone in ammonium assimilation and in the regulation of genes involved in nitrogen metabolism. It catalyzes the ATP-dependent biosynthesis of glutamine from glutamate and ammonia. Feedback-inhibited GlnA also interacts with and regulates the activity of the transcriptional regulator TnrA. During nitrogen limitation, TnrA is in its DNA-binding active state and turns on the transcription of genes required for nitrogen assimilation. Under conditions of nitrogen excess, feedback-inhibited GlnA forms a stable complex with TnrA, which inhibits its DNA-binding activity. In contrast, feedback-inhibited GlnA acts as a chaperone to stabilize the DNA-binding activity of GlnR, which represses the transcription of nitrogen assimilation genes. This is Glutamine synthetase from Halobacterium salinarum (strain ATCC 700922 / JCM 11081 / NRC-1) (Halobacterium halobium).